The sequence spans 510 residues: ATP synthase subunit alpha (510 aa).

169–176 (GDRQTGKT) lines the ATP pocket.

It belongs to the ATPase alpha/beta chains family. As to quaternary structure, F-type ATPases have 2 components, CF(1) - the catalytic core - and CF(0) - the membrane proton channel. CF(1) has five subunits: alpha(3), beta(3), gamma(1), delta(1), epsilon(1). CF(0) has three main subunits: a(1), b(2) and c(9-12). The alpha and beta chains form an alternating ring which encloses part of the gamma chain. CF(1) is attached to CF(0) by a central stalk formed by the gamma and epsilon chains, while a peripheral stalk is formed by the delta and b chains.

It localises to the cell membrane. It carries out the reaction ATP + H2O + 4 H(+)(in) = ADP + phosphate + 5 H(+)(out). Its function is as follows. Produces ATP from ADP in the presence of a proton gradient across the membrane. The alpha chain is a regulatory subunit. The sequence is that of ATP synthase subunit alpha from Thermomicrobium roseum (strain ATCC 27502 / DSM 5159 / P-2).